We begin with the raw amino-acid sequence, 365 residues long: Aspartate-semialdehyde dehydrogenase (365 aa).

Residues threonine 15, glycine 16, threonine 17, valine 18, serine 40, serine 43, leucine 89, and aspartate 90 each coordinate NADP(+). Cysteine 156 serves as the catalytic Acyl-thioester intermediate. Glycine 188 is a binding site for NADP(+). The active-site Proton acceptor is histidine 255. Position 342 (asparagine 342) interacts with NADP(+).

It belongs to the aspartate-semialdehyde dehydrogenase family. In terms of assembly, homotetramer; dimer of dimers.

It localises to the cytoplasm. It is found in the cytosol. The protein resides in the nucleus. It catalyses the reaction L-aspartate 4-semialdehyde + phosphate + NADP(+) = 4-phospho-L-aspartate + NADPH + H(+). Its pathway is amino-acid biosynthesis; L-methionine biosynthesis via de novo pathway; L-homoserine from L-aspartate: step 2/3. It functions in the pathway amino-acid biosynthesis; L-threonine biosynthesis; L-threonine from L-aspartate: step 2/5. With respect to regulation, inhibited by the competitive inhibitor 1,4-benzoquinone and derivates such as 2-chloro-3-methoxy-1,4-naphthoquinone, 2,3-dichloro-1,4-naphthoquinone, 2-chloro-1,4-naphthoquinone, 2-bromo-1,4-naphthoquinone and 2,3-dichloro-5,8-dihydroxy-1,4-naphthoquinone. Functionally, catalyzes the NADPH-dependent formation of L-aspartate 4-semialdehyde (L-ASA) by the reductive dephosphorylation of 4-phospho-L-aspartate. Mediates the second step in the biosynthesis of amino acids that derive from aspartate (the aspartate family of amino acids), including methioinine and threonine, the latter of which is a precursor to isoleucine. The polypeptide is Aspartate-semialdehyde dehydrogenase (Cryptococcus neoformans var. neoformans serotype D (strain JEC21 / ATCC MYA-565) (Filobasidiella neoformans)).